Here is a 4059-residue protein sequence, read N- to C-terminus: Fibrocystin (4059 aa).

A signal peptide spans 1–18 (MMLAWLVSLLSMEVLLLA). Residues 19-3851 (KPYSSFQFEP…LPVASKERST (3833 aa)) lie on the Extracellular side of the membrane. An IPT/TIG 1; atypical domain is found at 25–109 (QFEPAEGSLA…AGPYSLEMRS (85 aa)). 2 N-linked (GlcNAc...) asparagine glycosylation sites follow: Asn-55 and Asn-224. IPT/TIG domains are found at residues 135–230 (PVLY…FSVF) and 257–333 (PEIL…FEVG). The 161-residue stretch at 323–483 (AGNRGLRFEV…TWLNPDVVNT (161 aa)) folds into the PA14 domain. N-linked (GlcNAc...) asparagine glycans are attached at residues Asn-355, Asn-385, Asn-518, Asn-527, Asn-620, Asn-639, Asn-709, Asn-867, Asn-965, Asn-975, Asn-1082, Asn-1114, Asn-1133, Asn-1239, Asn-1273, Asn-1308, Asn-1319, Asn-1344, Asn-1373, Asn-1456, Asn-1471, Asn-1528, Asn-1613, Asn-1627, Asn-1694, Asn-1760, Asn-1775, Asn-1875, Asn-1879, Asn-1915, Asn-1955, Asn-2030, and Asn-2139. IPT/TIG domains lie at 945–997 (LVHF…FMLV) and 1017–1100 (PRLD…AFTY). The IPT/TIG 6; atypical domain occupies 1106-1190 (PVIVSLSRNR…IRSQGVDLYI (85 aa)). One can recognise an IPT/TIG 7 domain in the interval 1198–1266 (SVEPCSGSLL…RADVLTVLAS (69 aa)). The 82-residue stretch at 1297–1378 (PVVTAMWGEF…MGFANMSVVP (82 aa)) folds into the IPT/TIG 8; atypical domain. Residues 1385–1466 (PQIIAIFPTH…ITVLVNGLTS (82 aa)) enclose the IPT/TIG 9 domain. IPT/TIG domains are found at residues 1482–1566 (PIVD…RNFF) and 1569–1637 (PQVL…IDVN). The 85-residue stretch at 1654 to 1738 (PELLSVSRSQ…VLRATVTSVT (85 aa)) folds into the IPT/TIG 12; atypical domain. Residues 1928–2049 (HSWFPQRVPH…PEVTVTYLQA (122 aa)) enclose the G8 1 domain. PbH1 repeat units follow at residues 2244–2266 (TWGL…LLGS) and 2287–2321 (EQGS…YTFS). An N-linked (GlcNAc...) asparagine glycan is attached at Asn-2380. PbH1 repeat units follow at residues 2404–2426 (SNNL…DILE) and 2459–2481 (RWEL…AIRT). N-linked (GlcNAc...) asparagine glycans are attached at residues Asn-2466, Asn-2503, Asn-2529, Asn-2547, Asn-2581, Asn-2589, Asn-2627, Asn-2747, and Asn-2762. A G8 2 domain is found at 2741–2867 (KGWGGYNHTI…PKKSWVHLGA (127 aa)). 2 PbH1 repeats span residues 3004 to 3026 (SAGS…HASS) and 3027 to 3049 (SHGV…DVEG). A glycan (N-linked (GlcNAc...) asparagine) is linked at Asn-3051. A PbH1 7 repeat occupies 3080–3102 (AEDIILHGNVVAGSERLGFHVGG). Residues Asn-3133 and Asn-3162 are each glycosylated (N-linked (GlcNAc...) asparagine). One copy of the PbH1 8 repeat lies at 3188-3212 (TVQITLRNSVIVATSSSFDCIHDRK). 3 N-linked (GlcNAc...) asparagine glycosylation sites follow: Asn-3218, Asn-3719, and Asn-3831. The chain crosses the membrane as a helical span at residues 3852 to 3872 (IILALSLCSVASWVALSCLVC). The ciliary targeting sequence (CST) stretch occupies residues 3869–3886 (CLVCCWFKKSKTRKIKPE). Topologically, residues 3873-4059 (CWFKKSKTRK…LHTAPPETIQ (187 aa)) are cytoplasmic. Positions 3885 to 3898 (PEDISESQAKEQKK) are enriched in basic and acidic residues. A disordered region spans residues 3885 to 3915 (PEDISESQAKEQKKNTHNSSKPRGLQAKTAK). Positions 3946–3970 (KRKVSRLAVTEERTTTPAPKIPRIT) are nuclear localization signal (NLS). The segment at 4015-4038 (QERKQGQEPSQLDKGSDCTGLSQE) is disordered.

As to quaternary structure, interacts with CAMLG. Interacts with PKD2. Interacts (via CST) with ARF4; this interaction allows an efficient PKHD1 trafficking to the cilium. Interacts (via CST) with RAB8A; this interaction controls trafficking through the endomembrane systeme and to the cilium. Interacts (via CST) with TULP3; this interaction allows PKHD1 trafficking to the cilium. Palmitoylated. Palmitoylation facilitates the trafficking to the cilia and membrane targeting. In terms of processing, N-glycosylated. Post-translationally, several proteolytic cleavages occur within the extracellular domain, whereas at least one cleavage occurs within the cytoplasmic domain. Cleaved by a probable proprotein convertase which produces an extracellular domain (polyductin extracellular domain, (PECD)) and a C-terminal fragment (polyductin transmembrane fragment (PTM)) which are tethered together by disulfide bonds. This extracellular domain (PECD) is then shed from the primary cilium by activation of a member of the ADAM metalloproteinase disintegrins family, resulting in concomitant release of an intra-cellular C-terminal fragment (ICD) via a gamma-secretase-dependent process. The proteolytic cleavage of the C-terminal intracellular fragment (ICD) is controlled by cytosolic calcium concentration and activation of PKC. In terms of tissue distribution, expressed in bile ducts and distal nephron segments but is absent from the proximal tubule. Expressed in pancreas and kidney but also in the liver. Expressed primarily in the distal tubule and thick ascending limb of the loop of Henle, and at low-level in the proximal tubule before renal development is complete at P0.

The protein resides in the cell membrane. Its subcellular location is the cytoplasm. It is found in the apical cell membrane. It localises to the cytoskeleton. The protein localises to the cilium basal body. The protein resides in the cell projection. Its subcellular location is the cilium. It is found in the spindle. It localises to the chromosome. The protein localises to the centromere. The protein resides in the nucleus. Its subcellular location is the secreted. It is found in the extracellular exosome. It localises to the endoplasmic reticulum. The protein localises to the golgi apparatus. Its function is as follows. Promotes ciliogenesis in renal epithelial cells and therefore participates in the tubules formation and/or ensures the maintenance of the architecture of the lumen of the kidney. Has an impact on cellular symmetry by ensuring correct bipolar cell division through the regulation of centrosome duplication and mitotic spindle assembly and by maintaining oriented cell division (OCD) during tubular elongation through planar cell polarity (PCP) pathway. During epithelial cell morphogenesis, it also regulates cell-cell and cell-matrix adhesion and participates in cell motility. Promotes cell-cell contact through the positive regulation of PTK2 kinase activity leading to either positive regulation of epithelial cell proliferation through the HRAS/RAF1 pathways, or negative regulation of apoptosis through the PDK1/AKT1 pathway. May act in collecting-duct and biliary differentiation. May participate in the regulation of the cholangiocytes proliferation and the CCN2 production in an CXCL8-dependent manner. This is Fibrocystin from Mus musculus (Mouse).